The sequence spans 327 residues: L-lactate dehydrogenase (327 aa).

Residues V18, D39, K44, Y69, and G83–A84 each bind NAD(+). Substrate-binding positions include Q86, R92, and N124 to D127. Residues A122–N124 and S147 contribute to the NAD(+) site. D152–R155 lines the substrate pocket. Beta-D-fructose 1,6-bisphosphate contacts are provided by R157 and H172. H179 serves as the catalytic Proton acceptor. Position 224 is a phosphotyrosine (Y224). Residue T233 participates in substrate binding.

Belongs to the LDH/MDH superfamily. LDH family. In terms of assembly, homotetramer.

Its subcellular location is the cytoplasm. It catalyses the reaction (S)-lactate + NAD(+) = pyruvate + NADH + H(+). It participates in fermentation; pyruvate fermentation to lactate; (S)-lactate from pyruvate: step 1/1. Its activity is regulated as follows. Allosterically activated by fructose 1,6-bisphosphate (FBP). In terms of biological role, catalyzes the conversion of lactate to pyruvate. The polypeptide is L-lactate dehydrogenase (Streptococcus uberis (strain ATCC BAA-854 / 0140J)).